We begin with the raw amino-acid sequence, 132 residues long: L-ectoine synthase (132 aa).

The protein belongs to the ectoine synthase family.

It carries out the reaction (2S)-4-acetamido-2-aminobutanoate = L-ectoine + H2O. It functions in the pathway amine and polyamine biosynthesis; ectoine biosynthesis; L-ectoine from L-aspartate 4-semialdehyde: step 3/3. In terms of biological role, catalyzes the circularization of gamma-N-acetyl-alpha,gamma-diaminobutyric acid (ADABA) to ectoine (1,4,5,6-tetrahydro-2-methyl-4-pyrimidine carboxylic acid), which is an excellent osmoprotectant. This Rhodococcus opacus (strain B4) protein is L-ectoine synthase.